The chain runs to 316 residues: Thymidylate synthase (316 aa).

Residues arginine 23 and 178–179 (RR) contribute to the dUMP site. Cysteine 198 serves as the catalytic Nucleophile. DUMP contacts are provided by residues 218–221 (RSAD), asparagine 229, and 259–261 (HLY). Aspartate 221 serves as a coordination point for (6R)-5,10-methylene-5,6,7,8-tetrahydrofolate. Residue alanine 315 coordinates (6R)-5,10-methylene-5,6,7,8-tetrahydrofolate.

Belongs to the thymidylate synthase family. Bacterial-type ThyA subfamily. In terms of assembly, homodimer.

It localises to the cytoplasm. The catalysed reaction is dUMP + (6R)-5,10-methylene-5,6,7,8-tetrahydrofolate = 7,8-dihydrofolate + dTMP. Its pathway is pyrimidine metabolism; dTTP biosynthesis. Catalyzes the reductive methylation of 2'-deoxyuridine-5'-monophosphate (dUMP) to 2'-deoxythymidine-5'-monophosphate (dTMP) while utilizing 5,10-methylenetetrahydrofolate (mTHF) as the methyl donor and reductant in the reaction, yielding dihydrofolate (DHF) as a by-product. This enzymatic reaction provides an intracellular de novo source of dTMP, an essential precursor for DNA biosynthesis. The sequence is that of Thymidylate synthase from Lacticaseibacillus paracasei (strain ATCC 334 / BCRC 17002 / CCUG 31169 / CIP 107868 / KCTC 3260 / NRRL B-441) (Lactobacillus paracasei).